We begin with the raw amino-acid sequence, 363 residues long: Lovastatin nonaketide synthase, enoyl reductase component lovC (363 aa).

NADP(+) contacts are provided by residues 51–54, 174–177, 197–200, Tyr215, 262–263, Thr280, and 351–352; these read SDTK, STAT, SPHN, LN, and LS. Residues 226 to 272 form a lovB-binding region; sequence TYTKNNLRYALDCITNVESTTFCFAAIGRAGGHYVSLNPFPEHAATR.

The protein belongs to the zinc-containing alcohol dehydrogenase family. Each MAT domain from the lovB homodimer binds one lovC molecule to form the final active lovB-lovC megasynthase complex.

The catalysed reaction is holo-[lovastatin nonaketide synthase] + 9 malonyl-CoA + S-adenosyl-L-methionine + 11 NADPH + 19 H(+) = dihydromonacolin L-[lovastatin nonaketide synthase] + S-adenosyl-L-homocysteine + 9 CO2 + 11 NADP(+) + 9 CoA + 6 H2O. The protein operates within polyketide biosynthesis; lovastatin biosynthesis. Its function is as follows. Trans-enoyl reductase; part of the gene cluster that mediates the biosynthesis of lovastatin (also known as mevinolin, mevacor or monacolin K), a hypolipidemic inhibitor of (3S)-hydroxymethylglutaryl-coenzyme A (HMG-CoA) reductase (HMGR). The first step in the biosynthesis of lovastatin is the production of dihydromonacolin L acid (DML) by the lovastatin nonaketide synthase lovB and the trans-acting enoyl reductase lovC (called the lovB-lovC megasynthase complex) via condensation of one acetyl-CoA unit and 8 malonyl-CoA units. The formation of the LovB/C complex is essential for the integrity of the catalytic chamber to the complete total synthesis of DML acid. Dihydromonacolin L acid is released from lovB by the thioesterase lovG. Next, dihydromonacolin L acid is oxidized by the dihydromonacolin L monooxygenase lovA twice to form monacolin J acid. The 2-methylbutyrate moiety of lovastatin is synthesized by the lovastatin diketide synthase lovF via condensation of one acetyl-CoA unit and one malonyl-CoA unit. Finally, the covalent attachment of this moiety to monacolin J acid is catalyzed by the transesterase lovD to yield lovastatin. LovD has broad substrate specificity and can also convert monacolin J to simvastatin using alpha-dimethylbutanoyl-S-methyl-3-mercaptopropionate (DMB-S-MMP) as the thioester acyl donor, and can also catalyze the reverse reaction and function as hydrolase in vitro. LovD has much higher activity with LovF-bound 2-methylbutanoate than with free diketide substrates. This Aspergillus terreus protein is Lovastatin nonaketide synthase, enoyl reductase component lovC.